A 400-amino-acid polypeptide reads, in one-letter code: S-adenosylmethionine synthase (400 aa).

ATP is bound at residue histidine 15. Mg(2+) is bound at residue aspartate 17. Glutamate 43 provides a ligand contact to K(+). Glutamate 56 and glutamine 99 together coordinate L-methionine. The flexible loop stretch occupies residues 99–109 (QSLEIGAGVDT). Residues 174–176 (DGK), aspartate 254, 260–261 (RK), alanine 277, and lysine 281 contribute to the ATP site. Aspartate 254 serves as a coordination point for L-methionine. Residue lysine 285 coordinates L-methionine.

This sequence belongs to the AdoMet synthase family. In terms of assembly, homotetramer; dimer of dimers. Mg(2+) serves as cofactor. K(+) is required as a cofactor.

It is found in the cytoplasm. The catalysed reaction is L-methionine + ATP + H2O = S-adenosyl-L-methionine + phosphate + diphosphate. Its pathway is amino-acid biosynthesis; S-adenosyl-L-methionine biosynthesis; S-adenosyl-L-methionine from L-methionine: step 1/1. Its function is as follows. Catalyzes the formation of S-adenosylmethionine (AdoMet) from methionine and ATP. The overall synthetic reaction is composed of two sequential steps, AdoMet formation and the subsequent tripolyphosphate hydrolysis which occurs prior to release of AdoMet from the enzyme. This chain is S-adenosylmethionine synthase, found in Corynebacterium kroppenstedtii (strain DSM 44385 / JCM 11950 / CIP 105744 / CCUG 35717).